A 541-amino-acid chain; its full sequence is Chaperonin GroEL (541 aa).

Residues 29–32, 86–90, G413, 480–482, and D496 contribute to the ATP site; these read TLGP, DGTTT, and NAA.

This sequence belongs to the chaperonin (HSP60) family. Forms a cylinder of 14 subunits composed of two heptameric rings stacked back-to-back. Interacts with the co-chaperonin GroES.

The protein localises to the cytoplasm. It carries out the reaction ATP + H2O + a folded polypeptide = ADP + phosphate + an unfolded polypeptide.. Together with its co-chaperonin GroES, plays an essential role in assisting protein folding. The GroEL-GroES system forms a nano-cage that allows encapsulation of the non-native substrate proteins and provides a physical environment optimized to promote and accelerate protein folding. This is Chaperonin GroEL from Gardnerella vaginalis.